A 113-amino-acid chain; its full sequence is Major basic nuclear protein 1 (113 aa).

Residues 1–20 (MAPKMKAAMKAMKAPAMKGK) are disordered.

The protein localises to the nucleus. This chain is Major basic nuclear protein 1 (HCc1), found in Crypthecodinium cohnii (Dinoflagellate).